We begin with the raw amino-acid sequence, 667 residues long: WD repeat-containing protein 48 homolog (667 aa).

WD repeat units lie at residues 26 to 65 (QHRNGVNALQLDSNNGKLYSAGRDAIIRVWNTRTESNDKY), 71 to 110 (HHNDWVNDIVLCCNGRNLISASCDTTVKVWNAHKGFCMST), 113 to 152 (THRDYVQALAYAKDREQVASAGLDKAIFLWDVNTLTALTA), 164 to 203 (GSKDSIYSLAMNPSGTVIVSGSTENILRIWDPRTCMRSMK), 206 to 245 (GHTENVRCLVVSPDGNQVVSGSSDGTIKVWNLGQQRCIQT), 248 to 287 (VHKEGVWSLLMSENFQYIISGSRDRNIIVTEMRNPSNKML), 290 to 329 (EEKAPVLSLGYNIDKTGVWATTWNSDIRCWKLPMYDRCTL), and 349 to 388 (KGGAAIKECTVLNDKRYIITKDSQDQVVVYDVLRVIKKEE). The segment at 591-615 (ETTPSGGNANNSLQNSQSDANSEGS) is disordered.

The protein belongs to the WD repeat WDR48 family. In terms of assembly, catalytic component of the Usp12-46 deubiquitylase complex consisting of Usp12-46, Wdr20 and Uaf1; regulatory subunit that, together wtih Wdr20, stabilizes Usp12-46. The Usp12-46 deubiquitylase complex associates with arr/arrow; the interaction leads to deubiquitination and stabilization of arr/arrow.

In terms of biological role, regulatory component of the Usp12-46 deubiquitylase complex. activates deubiquitination by increasing the catalytic turnover without increasing the affinity of deubiquitinating enzymes for the substrate. The complex deubiquitylates the wg/wingless-signaling receptor arr/arrow, which stabilizes the receptor and increases its concentration at the cell surface; this enhances the sensitivity of cells to wg/wingless-signal stimulation. This increases the amplitude and spatial range of the signaling response to the wg/wingless morphogen gradient, facilitating the precise concentration-dependent regulation of its target genes. Together with Wdr20 and Usp12-46 required for wg/wingless-mediated signaling in the wing imaginal disc and for wg/wingless-dependent regulation of intestinal stem cell proliferation. The sequence is that of WD repeat-containing protein 48 homolog from Drosophila virilis (Fruit fly).